We begin with the raw amino-acid sequence, 502 residues long: Reduced meiotic recombination protein C1442.04c (502 aa).

3 positions are modified to phosphoserine: Ser328, Ser330, and Ser331. Disordered stretches follow at residues 353 to 391 (NDLN…LRDN), 420 to 440 (GSLN…ENVD), and 454 to 502 (ESAF…PSDD). Residues 367–378 (DGSEIITLDEND) are compositionally biased toward acidic residues. Polar residues-rich tracts occupy residues 420 to 436 (GSLN…TNDG) and 462 to 477 (GTIN…TTDT).

This sequence belongs to the RMR1 family.

It is found in the cytoplasm. It localises to the nucleus. Functionally, required for normal levels of gene conversion events during meiosis. In Schizosaccharomyces pombe (strain 972 / ATCC 24843) (Fission yeast), this protein is Reduced meiotic recombination protein C1442.04c.